Reading from the N-terminus, the 445-residue chain is N-succinylarginine dihydrolase (445 aa).

Residues 19–28, Asn110, and 137–138 each bind substrate; these read AGLSYGNVAS and HR. The active site involves Glu174. Arg214 is a binding site for substrate. The active site involves His250. Residues Asp252 and Asn363 each contribute to the substrate site. The active-site Nucleophile is Cys369.

Belongs to the succinylarginine dihydrolase family. As to quaternary structure, homodimer.

It carries out the reaction N(2)-succinyl-L-arginine + 2 H2O + 2 H(+) = N(2)-succinyl-L-ornithine + 2 NH4(+) + CO2. The protein operates within amino-acid degradation; L-arginine degradation via AST pathway; L-glutamate and succinate from L-arginine: step 2/5. Functionally, catalyzes the hydrolysis of N(2)-succinylarginine into N(2)-succinylornithine, ammonia and CO(2). This is N-succinylarginine dihydrolase from Shewanella loihica (strain ATCC BAA-1088 / PV-4).